A 500-amino-acid polypeptide reads, in one-letter code: Probable cytosol aminopeptidase (500 aa).

Residues Lys-265 and Asp-270 each coordinate Mn(2+). The active site involves Lys-277. The Mn(2+) site is built by Asp-288, Asp-347, and Glu-349. Residue Arg-351 is part of the active site.

This sequence belongs to the peptidase M17 family. Mn(2+) is required as a cofactor.

It is found in the cytoplasm. The catalysed reaction is Release of an N-terminal amino acid, Xaa-|-Yaa-, in which Xaa is preferably Leu, but may be other amino acids including Pro although not Arg or Lys, and Yaa may be Pro. Amino acid amides and methyl esters are also readily hydrolyzed, but rates on arylamides are exceedingly low.. It carries out the reaction Release of an N-terminal amino acid, preferentially leucine, but not glutamic or aspartic acids.. In terms of biological role, presumably involved in the processing and regular turnover of intracellular proteins. Catalyzes the removal of unsubstituted N-terminal amino acids from various peptides. The sequence is that of Probable cytosol aminopeptidase from Rickettsia felis (strain ATCC VR-1525 / URRWXCal2) (Rickettsia azadi).